Reading from the N-terminus, the 368-residue chain is Transcription factor TGA7 (368 aa).

Positions 70-82 (HNQIEAEQPSSND) are enriched in polar residues. The segment at 70-89 (HNQIEAEQPSSNDNQDDDGR) is disordered. Residues 91–151 (HDKMKRRLAQ…LGPSGSINTG (61 aa)) form the bZIP domain. 2 coiled-coil regions span residues 92–142 (DKMK…QGHL) and 252–285 (DQQILEVRNLQQSSQQAEDALSQGIDKLQQSLAE). Residues 93-113 (KMKRRLAQNREAARKSRLRKK) are basic motif. The interval 119-133 (LEESRLKLSQLEQEL) is leucine-zipper. A DOG1 domain is found at 152–363 (IASFEMEYSH…RALSSLWAAR (212 aa)).

Belongs to the bZIP family. Binds DNA as a dimer. Interacts with NPR1 and NPR4. Interacts with GRXC7/ROXY1.

The protein resides in the nucleus. Functionally, transcriptional activator that binds specifically to the DNA sequence 5'-TGACG-3'. Recognizes ocs elements like the as-1 motif of the cauliflower mosaic virus 35S promoter. Binding to the as-1-like cis elements mediate auxin- and salicylic acid-inducible transcription. May be involved in the induction of the systemic acquired resistance (SAR) via its interaction with NPR1. The sequence is that of Transcription factor TGA7 (TGA7) from Arabidopsis thaliana (Mouse-ear cress).